The sequence spans 146 residues: uncharacterized protein (146 aa).

Residues 7 to 27 traverse the membrane as a helical segment; that stretch reads FVLSITIVLVILIIIAFIWYN.

The protein belongs to the asfivirus E146L family.

It is found in the host membrane. It localises to the virion. This is an uncharacterized protein from Ornithodoros (relapsing fever ticks).